A 204-amino-acid chain; its full sequence is Outer-membrane lipoprotein carrier protein (204 aa).

An N-terminal signal peptide occupies residues 1-21; the sequence is MKKIAIVGALLTSFVASSVWA. The tract at residues 169–204 is disordered; it reads QRSSYQLKSQQNGAIDASKFTFTPPQGVTVDDQRNK. Polar residues predominate over residues 171–181; it reads SSYQLKSQQNG.

It belongs to the LolA family. In terms of assembly, monomer.

It is found in the periplasm. Functionally, participates in the translocation of lipoproteins from the inner membrane to the outer membrane. Only forms a complex with a lipoprotein if the residue after the N-terminal Cys is not an aspartate (The Asp acts as a targeting signal to indicate that the lipoprotein should stay in the inner membrane). This is Outer-membrane lipoprotein carrier protein from Enterobacter sp. (strain 638).